Reading from the N-terminus, the 481-residue chain is Protein hedgehog (481 aa).

The N-palmitoyl cysteine moiety is linked to residue C93. Residues E157, E158, D163, T193, E194, D197, and D199 each contribute to the Ca(2+) site. Residue G265 is the site of Cholesterol glycine ester attachment.

It belongs to the hedgehog family. As to quaternary structure, interacts with shf. In terms of processing, the C-terminal part of the hedgehog protein precursor displays an autoproteolysis activity that results in the cleavage of the full-length protein into two parts (N-product and C-product). In addition, the C-terminal part displays a cholesterol transferase activity that results by the covalent attachment of a cholesterol moiety to the C-terminal of the newly generated N-product. The N-product is the active species in both local and long-range signaling, whereas the C-product has no signaling activity. Post-translationally, cholesterylation is required for N-product targeting to lipid rafts and multimerization. N-palmitoylation by Rasp of the hedgehog N-product, within the secretory pathway, is required for the embryonic and larval patterning activities of the hedgehog signal.

Its subcellular location is the nucleus. The protein localises to the cytoplasm. It localises to the cell membrane. It catalyses the reaction glycyl-L-cysteinyl-[protein] + cholesterol + H(+) = [protein]-C-terminal glycyl cholesterol ester + N-terminal L-cysteinyl-[protein]. In terms of biological role, the C-terminal part of the hedgehog protein precursor displays an autoproteolysis activity that results in the cleavage of the full-length protein into two parts (N-product and C-product). In addition, the C-terminal part displays a cholesterol transferase activity that results by the covalent attachment of a cholesterol moiety to the C-terminal of the newly generated N-product. Once cleaved, the C-product has no signaling activity and diffuses from the cell. Its function is as follows. The dually lipidated hedgehog protein N-product is a morphogen which is essential for a variety of patterning events during development. Establishes the anterior-posterior axis of the embryonic segments and patterns the larval imaginal disks. Binds to the patched (ptc) receptor, which functions in association with smoothened (smo), to activate the transcription of target genes wingless (wg), decapentaplegic (dpp) and ptc. In the absence of hh, ptc represses the constitutive signaling activity of smo through fused (fu). Essential component of a signaling pathway which regulates the Duox-dependent gut immune response to bacterial uracil; required to activate Cad99C-dependent endosome formation, norpA-dependent Ca2+ mobilization and p38 MAPK, which are essential steps in the Duox-dependent production of reactive oxygen species (ROS) in response to intestinal bacterial infection. During photoreceptor differentiation, it up-regulates transcription of Ubr3, which in turn promotes the hh-signaling pathway by mediating the ubiquitination and degradation of cos. The protein is Protein hedgehog of Drosophila persimilis (Fruit fly).